Here is a 602-residue protein sequence, read N- to C-terminus: Elongation factor 4 (602 aa).

Positions 7–189 (KYIRNFSIVA…AIVNKVPAPD (183 aa)) constitute a tr-type G domain. Residues 19–24 (DHGKST) and 136–139 (NKID) contribute to the GTP site.

It belongs to the TRAFAC class translation factor GTPase superfamily. Classic translation factor GTPase family. LepA subfamily.

The protein resides in the cell membrane. It catalyses the reaction GTP + H2O = GDP + phosphate + H(+). In terms of biological role, required for accurate and efficient protein synthesis under certain stress conditions. May act as a fidelity factor of the translation reaction, by catalyzing a one-codon backward translocation of tRNAs on improperly translocated ribosomes. Back-translocation proceeds from a post-translocation (POST) complex to a pre-translocation (PRE) complex, thus giving elongation factor G a second chance to translocate the tRNAs correctly. Binds to ribosomes in a GTP-dependent manner. In Clostridium botulinum (strain 657 / Type Ba4), this protein is Elongation factor 4.